A 127-amino-acid polypeptide reads, in one-letter code: Glycine cleavage system H protein (127 aa).

The 83-residue stretch at 22-104 folds into the Lipoyl-binding domain; the sequence is KVRIGITDFA…YEKAWMIVVE (83 aa). The residue at position 63 (Lys63) is an N6-lipoyllysine.

It belongs to the GcvH family. As to quaternary structure, the glycine cleavage system is composed of four proteins: P, T, L and H. The cofactor is (R)-lipoate.

Functionally, the glycine cleavage system catalyzes the degradation of glycine. The H protein shuttles the methylamine group of glycine from the P protein to the T protein. In terms of biological role, is also involved in protein lipoylation via its role as an octanoyl/lipoyl carrier protein intermediate. This chain is Glycine cleavage system H protein, found in Bacillus licheniformis (strain ATCC 14580 / DSM 13 / JCM 2505 / CCUG 7422 / NBRC 12200 / NCIMB 9375 / NCTC 10341 / NRRL NRS-1264 / Gibson 46).